The sequence spans 429 residues: 3-phosphoshikimate 1-carboxyvinyltransferase (429 aa).

Residues Lys-22, Ser-23, and Arg-27 each contribute to the 3-phosphoshikimate site. Lys-22 is a phosphoenolpyruvate binding site. Residues Gly-94 and Arg-122 each contribute to the phosphoenolpyruvate site. Positions 167, 169, 315, and 342 each coordinate 3-phosphoshikimate. Gln-169 serves as a coordination point for phosphoenolpyruvate. The Proton acceptor role is filled by Asp-315. 2 residues coordinate phosphoenolpyruvate: Arg-346 and Arg-388.

It belongs to the EPSP synthase family. Monomer.

The protein localises to the cytoplasm. It carries out the reaction 3-phosphoshikimate + phosphoenolpyruvate = 5-O-(1-carboxyvinyl)-3-phosphoshikimate + phosphate. It participates in metabolic intermediate biosynthesis; chorismate biosynthesis; chorismate from D-erythrose 4-phosphate and phosphoenolpyruvate: step 6/7. Catalyzes the transfer of the enolpyruvyl moiety of phosphoenolpyruvate (PEP) to the 5-hydroxyl of shikimate-3-phosphate (S3P) to produce enolpyruvyl shikimate-3-phosphate and inorganic phosphate. The protein is 3-phosphoshikimate 1-carboxyvinyltransferase of Geobacter sp. (strain M21).